A 1538-amino-acid chain; its full sequence is Phenolphthiocerol/phthiocerol polyketide synthase subunit B (1538 aa).

The region spanning 33–455 (AEPVAVVGIG…GTNAHVIIEQ (423 aa)) is the Ketosynthase family 3 (KS3) domain. Active-site for beta-ketoacyl synthase activity residues include Cys205, His340, and His377. Residues 553 to 882 (DGSPGPGTVF…TNLYTADIAH (330 aa)) are acyltransferase. The active-site For malonyltransferase activity is the Ser649. 1153–1196 (SQLVIGATGNIGPHLIRQLARMGAKTIVAMARKPGALDELTQCL) is a binding site for NADP(+). Residues 1153–1328 (SQLVIGATGN…TVVDWGLWKS (176 aa)) form a beta-ketoacyl reductase region. The Carrier domain occupies 1423-1498 (DMLFDHVGAL…SLTDYLATVL (76 aa)). Ser1458 bears the O-(pantetheine 4'-phosphoryl)serine mark.

Requires NADP(+) as cofactor. The cofactor is pantetheine 4'-phosphate.

It carries out the reaction icosanoyl-[(phenol)carboxyphthiodiolenone synthase] + 2 (S)-methylmalonyl-CoA + 3 malonyl-CoA + 5 NADPH + 10 H(+) = C32-carboxyphthiodiolenone-[(phenol)carboxyphthiodiolenone synthase] + 5 CO2 + 5 NADP(+) + 5 CoA + 2 H2O. The enzyme catalyses docosanoyl-[(phenol)carboxyphthiodiolenone synthase] + 2 (S)-methylmalonyl-CoA + 3 malonyl-CoA + 5 NADPH + 10 H(+) = C34-carboxyphthiodiolenone-[(phenol)carboxyphthiodiolenone synthase] + 5 CO2 + 5 NADP(+) + 5 CoA + 2 H2O. The catalysed reaction is 17-(4-hydroxyphenyl)heptadecanoyl-[(phenol)carboxyphthiodiolenone synthase] + 2 (S)-methylmalonyl-CoA + 3 malonyl-CoA + 5 NADPH + 10 H(+) = C35-(phenol)carboxyphthiodiolenone-[(phenol)carboxyphthiodiolenone synthase] + 5 CO2 + 5 NADP(+) + 5 CoA + 2 H2O. It catalyses the reaction 19-(4-hydroxyphenyl)nonadecanoyl-[(phenol)carboxyphthiodiolenone synthase] + 2 (S)-methylmalonyl-CoA + 3 malonyl-CoA + 5 NADPH + 10 H(+) = C37-(phenol)carboxyphthiodiolenone-[(phenol)carboxyphthiodiolenone synthase] + 5 CO2 + 5 NADP(+) + 5 CoA + 2 H2O. The protein operates within lipid metabolism; fatty acid biosynthesis. Its function is as follows. Part of the PpsABCDE complex involved in the biosynthesis of the lipid core common to phthiocerols and phenolphthiocerols by successive additions of malonyl-CoA or methylmalonyl-CoA extender units. PpsA can accept as substrate the activated forms of either icosanoyl (C20), docosanoyl (C22) or lignoceroyl (C24) groups from FadD26, or a (4-hydroxyphenyl)-C17 or (4-hydroxyphenyl)-C19 fatty acyl from FadD29. PpsA initiates the biosynthesis and extends its substrate using a malonyl-CoA extender unit. The PpsB and PpsC proteins add the second and third malonyl-CoA extender units. PpsD adds an (R)-methylmalonyl unit and PpsE adds a second (R)-methylmalonyl unit. The incorporation of the methylmalonyl units results in formation of two branched methyl groups in the elongated product. This is Phenolphthiocerol/phthiocerol polyketide synthase subunit B (ppsB) from Mycobacterium tuberculosis (strain CDC 1551 / Oshkosh).